The sequence spans 223 residues: Cytochrome c biogenesis ATP-binding export protein CcmA (223 aa).

Residues leucine 20–alanine 222 enclose the ABC transporter domain. Glycine 52–threonine 59 contacts ATP.

Belongs to the ABC transporter superfamily. CcmA exporter (TC 3.A.1.107) family. As to quaternary structure, the complex is composed of two ATP-binding proteins (CcmA) and two transmembrane proteins (CcmB).

The protein localises to the cell inner membrane. It catalyses the reaction heme b(in) + ATP + H2O = heme b(out) + ADP + phosphate + H(+). Its function is as follows. Part of the ABC transporter complex CcmAB involved in the biogenesis of c-type cytochromes; once thought to export heme, this seems not to be the case, but its exact role is uncertain. Responsible for energy coupling to the transport system. This chain is Cytochrome c biogenesis ATP-binding export protein CcmA, found in Xylella fastidiosa (strain 9a5c).